A 471-amino-acid chain; its full sequence is Zinc finger protein 385B (471 aa).

Residues 1-93 are required for induction of apoptosis; sequence MNMANFLRGF…TGSTCHTTTL (93 aa). The Matrin-type 1 zinc-finger motif lies at 34 to 64; sequence SFCEVCNIQLNSAAQAQVHSNGKSHRKRVKQ. Disordered stretches follow at residues 50 to 92 and 175 to 275; these read QVHS…HTTT and HYKG…TVVE. Low complexity predominate over residues 76–92; sequence ASPSSNSSTGSTCHTTT. Residues 94-471 form an interaction with p53/TP53 region; it reads PALVRTPTLM…TPASILFAPY (378 aa). The Matrin-type 2 zinc finger occupies 157–187; the sequence is ISCNVCQLRFNSDSQAEAHYKGSKHAKKVKA. Over residues 206–220 the composition is skewed to polar residues; the sequence is ANPSCSITPITGNNS. A compositionally biased stretch (low complexity) spans 230 to 250; sequence KASSSSQPSSSESGSFLLKSG. Residues 260 to 269 show a composition bias toward polar residues; the sequence is TSPSKSTNGA. Residues 282-316 form a Matrin-type 3 zinc finger; sequence KKLLYCSLCKVAVNSLSQLEAHNTGSKHKTMVEAR. The disordered stretch occupies residues 318-340; that stretch reads GAGPIKSYPRPGSRLKMQNGSKG. The Matrin-type 4 zinc-finger motif lies at 348-378; it reads FHCEICDVHVNSEIQLKQHISSRRHKDRVAG.

Interacts with p53/TP53; the interaction is direct. As to expression, detected in germinal center of lymph node (at protein level). Expressed in spleen, lymph node and tonsil.

It localises to the nucleus. Functionally, may play a role in p53/TP53-mediated apoptosis. The protein is Zinc finger protein 385B (ZNF385B) of Homo sapiens (Human).